The chain runs to 131 residues: Translation initiation factor 5A (131 aa).

At K37 the chain carries Hypusine.

Belongs to the eIF-5A family.

It localises to the cytoplasm. Functions by promoting the formation of the first peptide bond. This is Translation initiation factor 5A (eIF5A) from Methanococcus maripaludis (strain C5 / ATCC BAA-1333).